The chain runs to 277 residues: Glycerol-3-phosphate acyltransferase (277 aa).

The next 5 membrane-spanning stretches (helical) occupy residues 3–23 (FFIFLILVGYLMGSINSAIIV), 55–75 (IMVMVFDALKGILPVILAKLL), 79–99 (PVTVAFTALAAVVGHMYPVFF), 111–131 (IGALLAFHFVIGVMVAATWLL), and 155–175 (LILVGNLNIFPPLFMITILVL). Residues 231-277 (KTEQAEAVKKPKAKKATTKAKKTTSKEETAKKPKSTKPKTKTVKEKE) are disordered. Basic residues-rich tracts occupy residues 240-253 (KPKAKKATTKAKKT) and 262-271 (KPKSTKPKTK).

It belongs to the PlsY family. In terms of assembly, probably interacts with PlsX.

The protein localises to the cell inner membrane. It catalyses the reaction an acyl phosphate + sn-glycerol 3-phosphate = a 1-acyl-sn-glycero-3-phosphate + phosphate. It functions in the pathway lipid metabolism; phospholipid metabolism. Its function is as follows. Catalyzes the transfer of an acyl group from acyl-phosphate (acyl-PO(4)) to glycerol-3-phosphate (G3P) to form lysophosphatidic acid (LPA). This enzyme utilizes acyl-phosphate as fatty acyl donor, but not acyl-CoA or acyl-ACP. The polypeptide is Glycerol-3-phosphate acyltransferase (Legionella pneumophila (strain Lens)).